The primary structure comprises 296 residues: L-fucono-1,5-lactonase (296 aa).

Belongs to the metallo-dependent hydrolases superfamily. As to quaternary structure, monomer. Requires Does not require a divalent metal for activity. The purified enzyme contains Zn(2+), but the addition of chelators does not diminish the catalytic activity of the enzyme, indicating that it does not require a divalent cation for substrate turnover. as cofactor.

It carries out the reaction L-fucono-1,5-lactone + H2O = L-fuconate + H(+). It catalyses the reaction L-fucono-1,4-lactone + H2O = L-fuconate + H(+). The enzyme catalyses D-arabinono-1,4-lactone + H2O = D-arabinonate + H(+). The catalysed reaction is L-xylono-1,4-lactone + H2O = L-xylonate + H(+). It carries out the reaction L-galactono-1,4-lactone + H2O = L-galactonate + H(+). Its pathway is carbohydrate degradation; L-fucose degradation. L-fucono-1,5-lactonase involved in an L-fucose degradation pathway. Catalyzes the hydrolysis of L-fucono-1,5-lactone to L-fuconate. L-fucono-1,5-lactone is the best substrate, but the enzyme can also hydrolyze L-fucono-1,4-lactone, L-galactono-1,4-lactone D-arabinono-1,4-lactone and L-xylono-1,4-lactone. This chain is L-fucono-1,5-lactonase, found in Burkholderia multivorans (strain ATCC 17616 / 249).